The following is a 131-amino-acid chain: Small ribosomal subunit protein uS8 (131 aa).

The protein belongs to the universal ribosomal protein uS8 family. As to quaternary structure, part of the 30S ribosomal subunit. Contacts proteins S5 and S12.

In terms of biological role, one of the primary rRNA binding proteins, it binds directly to 16S rRNA central domain where it helps coordinate assembly of the platform of the 30S subunit. The sequence is that of Small ribosomal subunit protein uS8 from Mycoplasmopsis agalactiae (strain NCTC 10123 / CIP 59.7 / PG2) (Mycoplasma agalactiae).